Here is a 166-residue protein sequence, read N- to C-terminus: Interferon gamma (166 aa).

The N-terminal stretch at 1-23 (MNYTSYILAFQLCVILGSSGCYC) is a signal peptide. Pyrrolidone carboxylic acid is present on glutamine 24. N-linked (GlcNAc...) asparagine glycans are attached at residues asparagine 39 and asparagine 106. Residues 147-166 (SNLRKRKRRQNQIQGRRASK) are disordered.

It belongs to the type II (or gamma) interferon family. Homodimer. Interacts with IFNGR1 (via extracellular domain); this interaction promotes IFNGR1 dimerization. In terms of tissue distribution, released primarily from activated T lymphocytes.

It localises to the secreted. Its function is as follows. Type II interferon produced by immune cells such as T-cells and NK cells that plays crucial roles in antimicrobial, antiviral, and antitumor responses by activating effector immune cells and enhancing antigen presentation. Primarily signals through the JAK-STAT pathway after interaction with its receptor IFNGR1 to affect gene regulation. Upon IFNG binding, IFNGR1 intracellular domain opens out to allow association of downstream signaling components JAK2, JAK1 and STAT1, leading to STAT1 activation, nuclear translocation and transcription of IFNG-regulated genes. Many of the induced genes are transcription factors such as IRF1 that are able to further drive regulation of a next wave of transcription. Plays a role in class I antigen presentation pathway by inducing a replacement of catalytic proteasome subunits with immunoproteasome subunits. In turn, increases the quantity, quality, and repertoire of peptides for class I MHC loading. Increases the efficiency of peptide generation also by inducing the expression of activator PA28 that associates with the proteasome and alters its proteolytic cleavage preference. Up-regulates as well MHC II complexes on the cell surface by promoting expression of several key molecules such as cathepsins B/CTSB, H/CTSH, and L/CTSL. Participates in the regulation of hematopoietic stem cells during development and under homeostatic conditions by affecting their development, quiescence, and differentiation. In Lama glama (Llama), this protein is Interferon gamma (IFNG).